Here is an 878-residue protein sequence, read N- to C-terminus: Aconitase htyD (878 aa).

Residues glutamine 173 and 290-292 (DSH) contribute to the substrate site. Positions 472, 535, and 538 each coordinate [4Fe-4S] cluster. 2 residues coordinate substrate: arginine 558 and arginine 563. A disordered region spans residues 626 to 671 (IAIANQRTKPAPTMPAYVEPYRSFQPPVPPSSDQPQSMKDHGKTSN). 742-743 (SR) serves as a coordination point for substrate.

This sequence belongs to the aconitase/IPM isomerase family.

It functions in the pathway antifungal biosynthesis. Its function is as follows. Aconitase; part of the gene cluster that mediates the de novo generation of L-homotyrosine from acetyl-CoA and 4-hydroxyphenyl-pyruvate. L-homotyrosine is a building block of echinocandin B, a fungal lipidated cyclic hexapeptide that acts as an antifungal agent. L-homotyrosine 4-hydroxyphenyl-pyruvate first undergoes an aldol-type condensation by htyA with the C-2 of acetyl-CoA followed by the release of CoA to form 2-(4-hydroxybenzyl)-malate. This is followed by isomerization of 2-(4-hydroxy-benzyl)-malate to 3-(4-hydroxybenzyl)-malate by htyD. Thereafter, 3-(4-hydroxybenzyl)-malate undergoes decarboxylation and oxidation to form 2-oxo-4-(4-hydroxybenzyl)butanoic acid, coupled to reduction of NAD(+) to NADH by htyC. The product then undergoes transamination catalyzed by htyB to form L-homotyrosine. The sequence is that of Aconitase htyD from Aspergillus rugulosus (Emericella rugulosa).